A 520-amino-acid polypeptide reads, in one-letter code: Nonsense-mediated mRNA decay factor SMG9 (520 aa).

2 disordered regions span residues 1–94 and 107–143; these read MSES…PAPL and GKGPVAATGASTPEGTAPPPPTAPAPPKGEKEGQRPT. Ser2 bears the N-acetylserine mark. 5 positions are modified to phosphoserine: Ser2, Ser4, Ser7, Ser32, and Ser53. The span at 36 to 53 shows a compositional bias: basic and acidic residues; the sequence is GRERDYIAPWERERRDGS. Over residues 78 to 94 the composition is skewed to pro residues; sequence QPPPSTAPAAPPAPAPL. The segment covering 112 to 121 has biased composition (low complexity); sequence AATGASTPEG. The span at 122–133 shows a compositional bias: pro residues; the sequence is TAPPPPTAPAPP. A Phosphoserine modification is found at Ser451.

It belongs to the SMG9 family. Self-associates to form homodimers and forms heterodimers with SMG8; these assembly forms may represent SMG1C intermediate forms. Component of the SMG1C complex composed of SMG1, SMG8 and SMG9. Interacts with DHX34; the interaction is RNA-independent. Post-translationally, phosphorylated by SMG1.

Functionally, involved in nonsense-mediated decay (NMD) of mRNAs containing premature stop codons. Is recruited by release factors to stalled ribosomes together with SMG1 and SMG8 (forming the SMG1C protein kinase complex) and, in the SMG1C complex, is required for the efficient association between SMG1 and SMG8. Plays a role in brain, heart, and eye development. The chain is Nonsense-mediated mRNA decay factor SMG9 from Rattus norvegicus (Rat).